We begin with the raw amino-acid sequence, 772 residues long: Mitochondrial intermediate peptidase (772 aa).

The transit peptide at Met1–Leu42 directs the protein to the mitochondrion. A Zn(2+)-binding site is contributed by His556. Glu557 is an active-site residue. Zn(2+)-binding residues include His560 and His563.

Belongs to the peptidase M3 family. Zn(2+) is required as a cofactor.

It is found in the mitochondrion matrix. The enzyme catalyses Release of an N-terminal octapeptide as second stage of processing of some proteins imported into the mitochondrion.. In terms of biological role, cleaves proteins, imported into the mitochondrion, to their mature size. While most mitochondrial precursor proteins are processed to the mature form in one step by mitochondrial processing peptidase (MPP), the sequential cleavage by MIP of an octapeptide after initial processing by MPP is a required step for a subgroup of nuclear-encoded precursor proteins destined for the matrix or the inner membrane. The chain is Mitochondrial intermediate peptidase (OCT1) from Laccaria bicolor (strain S238N-H82 / ATCC MYA-4686) (Bicoloured deceiver).